A 75-amino-acid chain; its full sequence is UPF0291 protein LMOf2365_1322 (75 aa).

The interval 56–75 (DPNGTDVTPHKVKQLRKNKH) is disordered. Positions 65 to 75 (HKVKQLRKNKH) are enriched in basic residues.

It belongs to the UPF0291 family.

The protein resides in the cytoplasm. This chain is UPF0291 protein LMOf2365_1322, found in Listeria monocytogenes serotype 4b (strain F2365).